Here is a 256-residue protein sequence, read N- to C-terminus: 2,3,4,5-tetrahydropyridine-2,6-dicarboxylate N-acetyltransferase (256 aa).

It belongs to the transferase hexapeptide repeat family. DapH subfamily.

It catalyses the reaction (S)-2,3,4,5-tetrahydrodipicolinate + acetyl-CoA + H2O = L-2-acetamido-6-oxoheptanedioate + CoA. Its pathway is amino-acid biosynthesis; L-lysine biosynthesis via DAP pathway; LL-2,6-diaminopimelate from (S)-tetrahydrodipicolinate (acetylase route): step 1/3. In terms of biological role, catalyzes the transfer of an acetyl group from acetyl-CoA to tetrahydrodipicolinate. This chain is 2,3,4,5-tetrahydropyridine-2,6-dicarboxylate N-acetyltransferase, found in Lactococcus lactis subsp. lactis (strain IL1403) (Streptococcus lactis).